The following is a 153-amino-acid chain: Large ribosomal subunit protein bL9 (153 aa).

Belongs to the bacterial ribosomal protein bL9 family.

In terms of biological role, binds to the 23S rRNA. The sequence is that of Large ribosomal subunit protein bL9 from Mycoplasma mycoides subsp. mycoides SC (strain CCUG 32753 / NCTC 10114 / PG1).